A 498-amino-acid chain; its full sequence is ATP synthase subunit beta, chloroplastic (498 aa).

172–179 (GGAGVGKT) is an ATP binding site.

The protein belongs to the ATPase alpha/beta chains family. In terms of assembly, F-type ATPases have 2 components, CF(1) - the catalytic core - and CF(0) - the membrane proton channel. CF(1) has five subunits: alpha(3), beta(3), gamma(1), delta(1), epsilon(1). CF(0) has four main subunits: a(1), b(1), b'(1) and c(9-12).

The protein localises to the plastid. Its subcellular location is the chloroplast thylakoid membrane. It catalyses the reaction ATP + H2O + 4 H(+)(in) = ADP + phosphate + 5 H(+)(out). Produces ATP from ADP in the presence of a proton gradient across the membrane. The catalytic sites are hosted primarily by the beta subunits. In Solanum bulbocastanum (Wild potato), this protein is ATP synthase subunit beta, chloroplastic.